Consider the following 889-residue polypeptide: Phosphatidylinositol 3-kinase VPS34 (889 aa).

A C2 PI3K-type domain is found at 34 to 184 (ASEKLIDPQL…EWIDELVLKK (151 aa)). One can recognise a PIK helical domain in the interval 298 to 540 (SDKHVKPDAK…ESFLSRLNSN (243 aa)). In terms of domain architecture, PI3K/PI4K catalytic spans 607-873 (MIDQCNVFKS…LINDSVNALL (267 aa)). The tract at residues 613–619 (VFKSSLS) is G-loop. Positions 742-750 (GVGDRHLDN) are catalytic loop. The tract at residues 761 to 782 (HADFGYILGQDPKPFPPLMKLP) is activation loop.

This sequence belongs to the PI3/PI4-kinase family. Type III PI4K subfamily. Component of the autophagy-specific VPS34 PI3-kinase complex I composed of VPS15, VPS30, VPS34, ATG14 and ATG38; and of the VPS34 PI3-kinase complex II composed of VPS15, VPS30, VPS34 and VPS38. In terms of processing, autophosphorylated.

The protein resides in the golgi apparatus. The protein localises to the trans-Golgi network membrane. Its subcellular location is the endosome membrane. It catalyses the reaction a 1,2-diacyl-sn-glycero-3-phospho-(1D-myo-inositol) + ATP = a 1,2-diacyl-sn-glycero-3-phospho-(1D-myo-inositol-3-phosphate) + ADP + H(+). Multifunctional phosphatidylinositol 3-kinase that plays a role in signaling in modulation of host immune response, intracellular survival and virulence. Catalytic subunit of the autophagy-specific VPS34 PI3-kinase complex I essential to recruit the ATG8-phosphatidylinositol conjugate and the ATG12-ATG5 conjugate to the pre-autophagosomal structure. Also involved in endosome-to-Golgi retrograde transport as part of the VPS34 PI3-kinase complex II. This second complex is required for the endosome-to-Golgi retrieval of PEP1 and KEX2, and the recruitment of VPS5 and VPS7, two components of the retromer complex, to endosomal membranes (probably through the synthesis of a specific pool of phosphatidylinositol 3-phosphate recruiting the retromer to the endosomes). Finally, it might also be involved in ethanol tolerance and cell wall integrity. This chain is Phosphatidylinositol 3-kinase VPS34, found in Candida glabrata (strain ATCC 2001 / BCRC 20586 / JCM 3761 / NBRC 0622 / NRRL Y-65 / CBS 138) (Yeast).